The sequence spans 412 residues: Poly-beta-1,6-N-acetyl-D-glucosamine synthase (412 aa).

4 consecutive transmembrane segments (helical) span residues 6–26 (FLLFYPVFMSIYWIVGSIYFY), 298–318 (IISILWVYIVLLYLGYLFITA), 332–352 (IFLLSSFTMTFINVIQFTVAL), and 366–386 (LIFVSWYPTVYWIINAAVVLV).

This sequence belongs to the glycosyltransferase 2 family.

The protein localises to the cell membrane. N-acetylglucosaminyltransferase that catalyzes the polymerization of single monomer units of UDP-N-acetylglucosamine to produce the linear homomer poly-beta-1,6-N-acetyl-D-glucosamine (PNAG, also referred to as PIA), a biofilm adhesin polysaccharide. Requires IcaD for full activity. In Staphylococcus aureus (strain NCTC 8325 / PS 47), this protein is Poly-beta-1,6-N-acetyl-D-glucosamine synthase (icaA).